The primary structure comprises 248 residues: Large ribosomal subunit protein uL1 (248 aa).

The protein belongs to the universal ribosomal protein uL1 family. As to quaternary structure, part of the 50S ribosomal subunit.

In terms of biological role, binds directly to 23S rRNA. The L1 stalk is quite mobile in the ribosome, and is involved in E site tRNA release. Functionally, protein L1 is also a translational repressor protein, it controls the translation of the L11 operon by binding to its mRNA. This is Large ribosomal subunit protein uL1 from Orientia tsutsugamushi (strain Boryong) (Rickettsia tsutsugamushi).